Here is a 948-residue protein sequence, read N- to C-terminus: Sensor histidine kinase RcsC (948 aa).

Residues 1–20 lie on the Cytoplasmic side of the membrane; sequence MKYLASFRTTLKVSRYLFRA. Residues 21–41 form a helical membrane-spanning segment; the sequence is LALLIWLLIAFVSVFYIVNAL. At 42–313 the chain is on the periplasmic side; the sequence is HQRESEIRQE…PVDLVLERIR (272 aa). Residues 314 to 334 form a helical membrane-spanning segment; it reads ILILNAILLNVLVGAGLFTLA. Residues 335 to 948 lie on the Cytoplasmic side of the membrane; the sequence is RMYERRIFIP…YAERVRKTRA (614 aa). The PAS domain maps to 357-425; sequence QFNRKIVASA…VLTSNNTNLQ (69 aa). The region spanning 476–692 is the Histidine kinase domain; the sequence is TVSHELRTPL…QFTLRIPLYG (217 aa). H479 is modified (phosphohistidine; by autocatalysis). The ABL domain occupies 705–805; sequence AGTCCWLAVR…ARIYSIELDS (101 aa). The Response regulatory domain occupies 826–940; it reads MILVVDDHPI…ALKQTLAVYA (115 aa). D875 bears the 4-aspartylphosphate mark.

The protein belongs to the RcsC family. Interacts with RcsD. Autophosphorylated. Activation probably requires a transfer of a phosphate group from a His in the transmitter domain to an Asp in the receiver domain.

It localises to the cell inner membrane. It carries out the reaction ATP + protein L-histidine = ADP + protein N-phospho-L-histidine.. Functionally, component of the Rcs signaling system, which controls transcription of numerous genes. RcsC functions as a membrane-associated protein kinase that phosphorylates RcsD in response to environmental signals. The phosphoryl group is then transferred to the response regulator RcsB. The sequence is that of Sensor histidine kinase RcsC from Salmonella typhi.